A 194-amino-acid chain; its full sequence is Peptidyl-tRNA hydrolase (194 aa).

TRNA is bound at residue Tyr-16. The active-site Proton acceptor is His-21. The tRNA site is built by Tyr-67, Asn-69, and Asn-115.

This sequence belongs to the PTH family. In terms of assembly, monomer.

It is found in the cytoplasm. The enzyme catalyses an N-acyl-L-alpha-aminoacyl-tRNA + H2O = an N-acyl-L-amino acid + a tRNA + H(+). Functionally, hydrolyzes ribosome-free peptidyl-tRNAs (with 1 or more amino acids incorporated), which drop off the ribosome during protein synthesis, or as a result of ribosome stalling. In terms of biological role, catalyzes the release of premature peptidyl moieties from peptidyl-tRNA molecules trapped in stalled 50S ribosomal subunits, and thus maintains levels of free tRNAs and 50S ribosomes. The chain is Peptidyl-tRNA hydrolase from Synechocystis sp. (strain ATCC 27184 / PCC 6803 / Kazusa).